An 87-amino-acid chain; its full sequence is UPF0386 protein RSKD131_0371 (87 aa).

It belongs to the UPF0386 family.

The sequence is that of UPF0386 protein RSKD131_0371 from Cereibacter sphaeroides (strain KD131 / KCTC 12085) (Rhodobacter sphaeroides).